Consider the following 511-residue polypeptide: Maturase K (511 aa).

Belongs to the intron maturase 2 family. MatK subfamily.

It is found in the plastid. The protein localises to the chloroplast. Functionally, usually encoded in the trnK tRNA gene intron. Probably assists in splicing its own and other chloroplast group II introns. This chain is Maturase K, found in Poa pratensis (Kentucky bluegrass).